The sequence spans 232 residues: Triosephosphate isomerase (232 aa).

Substrate is bound at residue Asn6–Lys8. Catalysis depends on His91, which acts as the Electrophile. Glu158 serves as the catalytic Proton acceptor. Gly164 and Ser194 together coordinate substrate.

Belongs to the triosephosphate isomerase family. Homodimer.

The protein resides in the cytoplasm. The enzyme catalyses D-glyceraldehyde 3-phosphate = dihydroxyacetone phosphate. It participates in carbohydrate biosynthesis; gluconeogenesis. The protein operates within carbohydrate degradation; glycolysis; D-glyceraldehyde 3-phosphate from glycerone phosphate: step 1/1. Its function is as follows. Involved in the gluconeogenesis. Catalyzes stereospecifically the conversion of dihydroxyacetone phosphate (DHAP) to D-glyceraldehyde-3-phosphate (G3P). The protein is Triosephosphate isomerase of Campylobacter hominis (strain ATCC BAA-381 / DSM 21671 / CCUG 45161 / LMG 19568 / NCTC 13146 / CH001A).